We begin with the raw amino-acid sequence, 515 residues long: 2-isopropylmalate synthase (515 aa).

One can recognise a Pyruvate carboxyltransferase domain in the interval 4–266 (INIFDTTLRD…ETRLNLQEIK (263 aa)). Mn(2+) contacts are provided by Asp-13, His-201, His-203, and Asn-237. Positions 391-515 (QLSSLQVQYG…RAENQKVAMQ (125 aa)) are regulatory domain.

Belongs to the alpha-IPM synthase/homocitrate synthase family. LeuA type 1 subfamily. In terms of assembly, homodimer. Mn(2+) serves as cofactor.

Its subcellular location is the cytoplasm. The catalysed reaction is 3-methyl-2-oxobutanoate + acetyl-CoA + H2O = (2S)-2-isopropylmalate + CoA + H(+). It functions in the pathway amino-acid biosynthesis; L-leucine biosynthesis; L-leucine from 3-methyl-2-oxobutanoate: step 1/4. Its function is as follows. Catalyzes the condensation of the acetyl group of acetyl-CoA with 3-methyl-2-oxobutanoate (2-ketoisovalerate) to form 3-carboxy-3-hydroxy-4-methylpentanoate (2-isopropylmalate). This chain is 2-isopropylmalate synthase, found in Geobacillus sp. (strain WCH70).